The following is a 490-amino-acid chain: Glutamate--tRNA ligase 2 (490 aa).

The 'HIGH' region motif lies at 33–43; that stretch reads PSPTGYLHIGG. A 'KMSKS' region motif is present at residues 262-266; sequence KLSKR. K265 contributes to the ATP binding site.

It belongs to the class-I aminoacyl-tRNA synthetase family. Glutamate--tRNA ligase type 1 subfamily. In terms of assembly, monomer.

It is found in the cytoplasm. The enzyme catalyses tRNA(Glu) + L-glutamate + ATP = L-glutamyl-tRNA(Glu) + AMP + diphosphate. Its function is as follows. Catalyzes the attachment of glutamate to tRNA(Glu) in a two-step reaction: glutamate is first activated by ATP to form Glu-AMP and then transferred to the acceptor end of tRNA(Glu). This is Glutamate--tRNA ligase 2 from Parvibaculum lavamentivorans (strain DS-1 / DSM 13023 / NCIMB 13966).